The primary structure comprises 242 residues: Derlin-1 (242 aa).

At Met-1–Thr-20 the chain is on the cytoplasmic side. Residues Leu-21 to Leu-41 form a helical membrane-spanning segment. Residues Tyr-42–Leu-55 lie on the Lumenal side of the membrane. The helical transmembrane segment at Phe-56 to Ile-76 threads the bilayer. Topologically, residues Ala-77–Asp-94 are cytoplasmic. Residues Phe-95–Leu-115 form a helical membrane-spanning segment. The Lumenal portion of the chain corresponds to Asp-116–Ala-157. Residues Met-158–Val-178 form a helical membrane-spanning segment. The Cytoplasmic portion of the chain corresponds to Gly-179–Gln-242.

Belongs to the derlin family. Seedling shoots and roots.

It localises to the endoplasmic reticulum membrane. Functionally, may be involved in the degradation process of specific misfolded endoplasmic reticulum (ER) luminal proteins. This is Derlin-1 (DER1) from Oryza sativa subsp. japonica (Rice).